A 178-amino-acid chain; its full sequence is FMN reductase (NADH) RutF (178 aa).

Belongs to the non-flavoprotein flavin reductase family. RutF subfamily.

It catalyses the reaction FMNH2 + NAD(+) = FMN + NADH + 2 H(+). Functionally, catalyzes the reduction of FMN to FMNH2 which is used to reduce pyrimidine by RutA via the Rut pathway. The polypeptide is FMN reductase (NADH) RutF (Pseudomonas syringae pv. syringae (strain B728a)).